Reading from the N-terminus, the 501-residue chain is Cytochrome P450 90A4 (501 aa).

A helical transmembrane segment spans residues 2-22 (AAAALLLLAAAAAAVVVAMAL). Heme is bound at residue cysteine 446.

This sequence belongs to the cytochrome P450 family. The cofactor is heme. Highly expressed in shoot apex and inflorenscence. Expressed in roots, stems, leaf blades and leaf sheaths.

Its subcellular location is the cell membrane. Its pathway is plant hormone biosynthesis; brassinosteroid biosynthesis. In terms of biological role, catalyzes the C23-alpha-hydroxylation step in brassinosteroid biosynthesis. Converts 6-deoxocathasterone to 6-deoxoteasterone in the late C6-oxidation pathway and cathasterone to teasterone (TE) in the early C6-oxidation pathway of brassinolide (BL) biosynthesis. The polypeptide is Cytochrome P450 90A4 (Oryza sativa subsp. japonica (Rice)).